Consider the following 247-residue polypeptide: 4-nitrobenzoate reductase (247 aa).

FMN is bound at residue 29–33 (RRSVR). NADP(+) contacts are provided by Ser59, Arg112, Tyr120, and Leu126. FMN is bound at residue Arg232.

This sequence belongs to the nitroreductase family. Requires FMN as cofactor.

The catalysed reaction is 4-nitrobenzoate + 2 NADPH + 2 H(+) = 4-hydroxylaminobenzoate + 2 NADP(+) + H2O. In terms of biological role, nitroreductase involved in the degradation of nitroaromatic compounds. Catalyzes the conversion of 4-nitrobenzoate to 4-hydroxylaminobenzoate. The protein is 4-nitrobenzoate reductase of Nocardioides sp. (strain LMS-CY).